A 420-amino-acid chain; its full sequence is uncharacterized protein (420 aa).

This is an uncharacterized protein from Encephalitozoon cuniculi (strain GB-M1) (Microsporidian parasite).